We begin with the raw amino-acid sequence, 373 residues long: MSLQSSIRADSNCTLPNNPVCVLLPVDFIVAAMASSTSSAMAKWAAQAARGFAAAAPSSGKGRKVAVLGAAGGIGQPLSMLMKMNSQVSSLSLYDIAGTPGVAADVSHINTKAQVKGFDKDGLAEALRGCDLVIIPAGVPRKPGMTRDDLFKINAGIVRDLVTAVGQHCPGAVLNIISNPVNSTVPIAAEQLKKMGVYDKRKVMGVTTLDVVRAKTFYAEKNGLDVASVDVPVVGGHAGVTILPLFSQATPKATMSAEVLDALTKRTQDGGTEVVQAKAGKGSATLSMAYAAALFADSCLRGLNGAPVVECTYVESTVTDAPYFASKVKLSTEGVDKIHDLGPLSDYEKAGLKAMMPELLASIEKGVQFVKGA.

Residues 69–75 (GAAGGIG) and aspartate 95 contribute to the NAD(+) site. Residues arginine 141 and arginine 147 each coordinate substrate. NAD(+) contacts are provided by residues asparagine 154 and 177–179 (ISN). Residues asparagine 179 and arginine 213 each coordinate substrate. Histidine 237 functions as the Proton acceptor in the catalytic mechanism. An NAD(+)-binding site is contributed by methionine 288.

This sequence belongs to the LDH/MDH superfamily. MDH type 1 family. Homodimer.

The protein localises to the mitochondrion matrix. It catalyses the reaction (S)-malate + NAD(+) = oxaloacetate + NADH + H(+). The polypeptide is Malate dehydrogenase, mitochondrial (Chlamydomonas reinhardtii (Chlamydomonas smithii)).